A 203-amino-acid polypeptide reads, in one-letter code: Ribosomal RNA small subunit methyltransferase G (203 aa).

S-adenosyl-L-methionine-binding positions include glycine 73, leucine 78, 124–125 (VE), and arginine 138.

The protein belongs to the methyltransferase superfamily. RNA methyltransferase RsmG family.

Its subcellular location is the cytoplasm. The catalysed reaction is guanosine(527) in 16S rRNA + S-adenosyl-L-methionine = N(7)-methylguanosine(527) in 16S rRNA + S-adenosyl-L-homocysteine. Specifically methylates the N7 position of guanine in position 527 of 16S rRNA. In Haemophilus ducreyi (strain 35000HP / ATCC 700724), this protein is Ribosomal RNA small subunit methyltransferase G.